A 192-amino-acid chain; its full sequence is Adenylate kinase (192 aa).

ATP is bound at residue 10–18 (GVPGVGSTT).

Belongs to the archaeal adenylate kinase family. Monomer.

It localises to the cytoplasm. It carries out the reaction AMP + ATP = 2 ADP. The protein is Adenylate kinase (adkA) of Methanocaldococcus jannaschii (strain ATCC 43067 / DSM 2661 / JAL-1 / JCM 10045 / NBRC 100440) (Methanococcus jannaschii).